We begin with the raw amino-acid sequence, 470 residues long: Glutamate--tRNA ligase (470 aa).

The 'HIGH' region signature appears at 9-19 (PSPTGFLHVGG). Positions 236 to 240 (RLSKR) match the 'KMSKS' region motif. Residue K239 participates in ATP binding.

This sequence belongs to the class-I aminoacyl-tRNA synthetase family. Glutamate--tRNA ligase type 1 subfamily. As to quaternary structure, monomer.

The protein localises to the cytoplasm. The enzyme catalyses tRNA(Glu) + L-glutamate + ATP = L-glutamyl-tRNA(Glu) + AMP + diphosphate. In terms of biological role, catalyzes the attachment of glutamate to tRNA(Glu) in a two-step reaction: glutamate is first activated by ATP to form Glu-AMP and then transferred to the acceptor end of tRNA(Glu). The polypeptide is Glutamate--tRNA ligase (Legionella pneumophila (strain Lens)).